A 992-amino-acid chain; its full sequence is UPF0182 protein RHA1_ro06389 (992 aa).

A run of 7 helical transmembrane segments spans residues 18-38 (VLLV…RLIS), 63-83 (LLLF…ALLL), 114-134 (LFGL…AQSS), 174-194 (WLFV…YIFG), 211-231 (VQLA…YWFD), 260-280 (KLIL…AIFL), and 288-308 (MATA…PLVV). The interval 904-948 (TGSVATAPSAEEGTPPETGTTPPVDQGAAPAPTAPATPPSGTDVS) is disordered. The segment covering 908–934 (ATAPSAEEGTPPETGTTPPVDQGAAPA) has biased composition (low complexity).

This sequence belongs to the UPF0182 family.

The protein resides in the cell membrane. The chain is UPF0182 protein RHA1_ro06389 from Rhodococcus jostii (strain RHA1).